Here is a 401-residue protein sequence, read N- to C-terminus: Formate dehydrogenase (401 aa).

Substrate-binding residues include isoleucine 123 and asparagine 147. NAD(+) contacts are provided by residues serine 148, 202–203 (RI), aspartate 222, 257–261 (PLHPE), threonine 283, aspartate 309, 333–336 (HISG), and serine 381.

It belongs to the D-isomer specific 2-hydroxyacid dehydrogenase family. FDH subfamily. In terms of assembly, homodimer.

It is found in the cytoplasm. The enzyme catalyses formate + NAD(+) = CO2 + NADH. In terms of biological role, catalyzes the NAD(+)-dependent oxidation of formate to carbon dioxide. Formate oxidation is the final step in the methanol oxidation pathway in methylotrophic microorganisms. Has a role in the detoxification of exogenous formate in non-methylotrophic organisms. The polypeptide is Formate dehydrogenase (Pseudomonas sp. (strain 101) (Achromobacter parvulus T1)).